The following is a 239-amino-acid chain: Ion-translocating oxidoreductase complex subunit E (239 aa).

Transmembrane regions (helical) follow at residues leucine 41–valine 61, leucine 71–alanine 91, glutamate 95–glycine 115, serine 130–leucine 150, and glycine 184–leucine 204.

Belongs to the NqrDE/RnfAE family. As to quaternary structure, the complex is composed of six subunits: RnfA, RnfB, RnfC, RnfD, RnfE and RnfG.

The protein resides in the cell inner membrane. Its function is as follows. Part of a membrane-bound complex that couples electron transfer with translocation of ions across the membrane. This chain is Ion-translocating oxidoreductase complex subunit E, found in Pseudomonas paraeruginosa (strain DSM 24068 / PA7) (Pseudomonas aeruginosa (strain PA7)).